A 1366-amino-acid chain; its full sequence is DNA-directed RNA polymerase subunit beta' (1366 aa).

Residues 1–20 show a composition bias toward basic residues; the sequence is MTSSKPKKTSRVRKTTKNSK. Positions 1 to 37 are disordered; the sequence is MTSSKPKKTSRVRKTTKNSKKNNPVTMPVLPKTPPSF. The Zn(2+) site is built by C248, C315, C322, and C325. The segment at 1292–1366 is disordered; that stretch reads TVDMPQSPAV…LQEEGLLSDE (75 aa). The segment covering 1354–1366 has biased composition (low complexity); that stretch reads LEGLQEEGLLSDE.

Belongs to the RNA polymerase beta' chain family. RpoC2 subfamily. In terms of assembly, in cyanobacteria the RNAP catalytic core is composed of 2 alpha, 1 beta, 1 beta', 1 gamma and 1 omega subunit. When a sigma factor is associated with the core the holoenzyme is formed, which can initiate transcription. It depends on Zn(2+) as a cofactor.

It catalyses the reaction RNA(n) + a ribonucleoside 5'-triphosphate = RNA(n+1) + diphosphate. Functionally, DNA-dependent RNA polymerase catalyzes the transcription of DNA into RNA using the four ribonucleoside triphosphates as substrates. The polypeptide is DNA-directed RNA polymerase subunit beta' (Prochlorococcus marinus (strain MIT 9215)).